Reading from the N-terminus, the 224-residue chain is Imidazole glycerol phosphate synthase subunit HisH (224 aa).

Residues 5–214 (DTIIIDTGCA…MKMNAGSFAG (210 aa)) enclose the Glutamine amidotransferase type-1 domain. The active-site Nucleophile is the Cys-80. Active-site residues include His-189 and Glu-191.

In terms of assembly, heterodimer of HisH and HisF.

The protein localises to the cytoplasm. It catalyses the reaction 5-[(5-phospho-1-deoxy-D-ribulos-1-ylimino)methylamino]-1-(5-phospho-beta-D-ribosyl)imidazole-4-carboxamide + L-glutamine = D-erythro-1-(imidazol-4-yl)glycerol 3-phosphate + 5-amino-1-(5-phospho-beta-D-ribosyl)imidazole-4-carboxamide + L-glutamate + H(+). The enzyme catalyses L-glutamine + H2O = L-glutamate + NH4(+). The protein operates within amino-acid biosynthesis; L-histidine biosynthesis; L-histidine from 5-phospho-alpha-D-ribose 1-diphosphate: step 5/9. Functionally, IGPS catalyzes the conversion of PRFAR and glutamine to IGP, AICAR and glutamate. The HisH subunit catalyzes the hydrolysis of glutamine to glutamate and ammonia as part of the synthesis of IGP and AICAR. The resulting ammonia molecule is channeled to the active site of HisF. This is Imidazole glycerol phosphate synthase subunit HisH from Shewanella loihica (strain ATCC BAA-1088 / PV-4).